The chain runs to 100 residues: NAD(P)H-quinone oxidoreductase subunit 4L, chloroplastic (100 aa).

The next 3 helical transmembrane spans lie at 2–22 (ILQH…FGLI), 28–48 (VKIL…LVIF), and 61–81 (LFGL…LAIL).

The protein belongs to the complex I subunit 4L family. As to quaternary structure, NDH is composed of at least 16 different subunits, 5 of which are encoded in the nucleus.

The protein localises to the plastid. It localises to the chloroplast thylakoid membrane. The catalysed reaction is a plastoquinone + NADH + (n+1) H(+)(in) = a plastoquinol + NAD(+) + n H(+)(out). It catalyses the reaction a plastoquinone + NADPH + (n+1) H(+)(in) = a plastoquinol + NADP(+) + n H(+)(out). Functionally, NDH shuttles electrons from NAD(P)H:plastoquinone, via FMN and iron-sulfur (Fe-S) centers, to quinones in the photosynthetic chain and possibly in a chloroplast respiratory chain. The immediate electron acceptor for the enzyme in this species is believed to be plastoquinone. Couples the redox reaction to proton translocation, and thus conserves the redox energy in a proton gradient. This chain is NAD(P)H-quinone oxidoreductase subunit 4L, chloroplastic, found in Chara vulgaris (Common stonewort).